A 641-amino-acid chain; its full sequence is Fibrinogen alpha-2 chain (641 aa).

An N-terminal signal peptide occupies residues 1 to 23; the sequence is MTLRGVSMVLTWCLLVSKAWSSG. Residues 107-226 are a coiled coil; that stretch reads SVSDVSNQVV…IVHESFSVER (120 aa). Residues 228–327 are disordered; sequence DARSLHPYSG…QKTEELSFKK (100 aa). Asn271 carries N-linked (GlcNAc...) asparagine glycosylation. Positions 279 to 289 are enriched in basic and acidic residues; the sequence is VDERSKVEKDV. Residues 293–317 are compositionally biased toward low complexity; the sequence is STSSVSSSSSSSSSSSSTSSTISST. The Fibrinogen C-terminal domain maps to 395-636; the sequence is RTNLSEYIDC…RTAVRFRRVQ (242 aa). An N-linked (GlcNAc...) asparagine glycan is attached at Asn397. Cys404 and Cys435 are joined by a disulfide. N-linked (GlcNAc...) asparagine glycosylation occurs at Asn458. A disulfide bridge connects residues Cys571 and Cys584.

As to quaternary structure, heterohexamer; disulfide linked. Contains 2 sets of 3 non-identical chains (alpha, beta and gamma). The 2 heterotrimers are in head to head conformation with the N-termini in a small central domain. In terms of processing, conversion of fibrinogen to fibrin is triggered by thrombin, which cleaves fibrinopeptides A and B from alpha and beta chains, and thus exposes the N-terminal polymerization sites responsible for the formation of the soft clot. The soft clot is converted into the hard clot by factor XIIIA which catalyzes the epsilon-(gamma-glutamyl)lysine cross-linking between gamma chains (stronger) and between alpha chains (weaker) of different monomers. Post-translationally, forms F13A-mediated cross-links between a glutamine and the epsilon-amino group of a lysine residue, forming fibronectin-fibrinogen heteropolymers.

The protein resides in the secreted. Functionally, fibrinogen has a double function: yielding monomers that polymerize into fibrin and acting as a cofactor in platelet aggregation. This chain is Fibrinogen alpha-2 chain, found in Petromyzon marinus (Sea lamprey).